The sequence spans 410 residues: MTDTAPQNDPTTSHVLPKGIRFAGVAAGIKASGKPDVSLIVTDRPSVMAGVYTTNQIVAAPVVLTRAKTPTSTGRVVLTNSGNANACTGDEGMQNAKTMCDLAAKLADCDSADVMVMSTGVIGKPLPMEKVRAGIEAAAGKLGDAESDFIASADAICTTDQFRKTVSETVTIRGQQFRIAAMCKGAGMIAPNMATMLGVVMTDAPIGPDAAQASLKQIAGRTFNRVSVDGHTSTNDTVMLVCTGMSVSEDAKEFNSDELKIWQEAATQVALKLAKMLVADGEGAARFFEVRVSGAADDGDAFVIAKTVAASPLVKTAITGGDPNWGRIVSAAGYAGPKIEPERTSLVIDGVTVFENGTPLSIDAAKLSESMKANSEVLADLTVGDGPGKASFWASDLTEAYVRFNSLYTT.

Positions 158, 184, 195, 282, 405, and 410 each coordinate substrate. The Nucleophile role is filled by Thr-195.

This sequence belongs to the ArgJ family. In terms of assembly, heterotetramer of two alpha and two beta chains.

The protein resides in the cytoplasm. It carries out the reaction N(2)-acetyl-L-ornithine + L-glutamate = N-acetyl-L-glutamate + L-ornithine. It catalyses the reaction L-glutamate + acetyl-CoA = N-acetyl-L-glutamate + CoA + H(+). Its pathway is amino-acid biosynthesis; L-arginine biosynthesis; L-ornithine and N-acetyl-L-glutamate from L-glutamate and N(2)-acetyl-L-ornithine (cyclic): step 1/1. It participates in amino-acid biosynthesis; L-arginine biosynthesis; N(2)-acetyl-L-ornithine from L-glutamate: step 1/4. Its function is as follows. Catalyzes two activities which are involved in the cyclic version of arginine biosynthesis: the synthesis of N-acetylglutamate from glutamate and acetyl-CoA as the acetyl donor, and of ornithine by transacetylation between N(2)-acetylornithine and glutamate. In Rhodopirellula baltica (strain DSM 10527 / NCIMB 13988 / SH1), this protein is Arginine biosynthesis bifunctional protein ArgJ.